We begin with the raw amino-acid sequence, 223 residues long: Sigma non-opioid intracellular receptor 1 (223 aa).

Over Met1 to Trp9 the chain is Lumenal. The targeting to endoplasmic reticulum-associated lipid droplets stretch occupies residues Pro2–Arg8. Residues Ala10 to Leu30 traverse the membrane as a helical segment. Over Gly31 to Ser223 the chain is Cytoplasmic. Residues Ser99–Leu106 are important for ligand-binding. The interval Val177 to Ser223 is C-terminal hydrophobic region.

Belongs to the ERG2 family. In terms of assembly, homotrimer. Interacts with KCNA4. Interacts with KCNA2; cocaine consumption leads to increased interaction. Forms a ternary complex with ANK2 and ITPR3. The complex is disrupted by agonists. Interacts with RNF112 in an oxidative stress-regulated manner. As to expression, widely expressed with higher expression in liver, brain, kidney and thymus. Expressed throughout the brain with higher expression within cerebral cortex, hippocampus and cerebellum. Within the hippocampus expressed in cornu ammonis pyramidal neurons, the granular cells of the dentate gyrus as well as interneurons. Within the cerebellum, expressed in Purkinje cell bodies. Highly expressed in the brainstem and motor neurons of the spinal cord. Expressed by neural retina, retinal pigment epithelial cells and lens.

The protein resides in the nucleus inner membrane. Its subcellular location is the nucleus outer membrane. The protein localises to the nucleus envelope. It localises to the cytoplasmic vesicle. It is found in the endoplasmic reticulum membrane. The protein resides in the membrane. Its subcellular location is the lipid droplet. The protein localises to the cell junction. It localises to the cell membrane. It is found in the cell projection. The protein resides in the growth cone. Its subcellular location is the postsynaptic density membrane. Functions in lipid transport from the endoplasmic reticulum and is involved in a wide array of cellular functions probably through regulation of the biogenesis of lipid microdomains at the plasma membrane. Involved in the regulation of different receptors it plays a role in BDNF signaling and EGF signaling. Also regulates ion channels like the potassium channel and could modulate neurotransmitter release. Plays a role in calcium signaling through modulation together with ANK2 of the ITP3R-dependent calcium efflux at the endoplasmic reticulum. Plays a role in several other cell functions including proliferation, survival and death. Originally identified for its ability to bind various psychoactive drugs it is involved in learning processes, memory and mood alteration. Necessary for proper mitochondrial axonal transport in motor neurons, in particular the retrograde movement of mitochondria. Plays a role in protecting cells against oxidative stress-induced cell death via its interaction with RNF112. This Mus musculus (Mouse) protein is Sigma non-opioid intracellular receptor 1 (Sigmar1).